Reading from the N-terminus, the 361-residue chain is Peptide chain release factor 1 (361 aa).

Residue glutamine 237 is modified to N5-methylglutamine. Residues 287–297 show a composition bias toward basic and acidic residues; sequence KQQKEQSDTRK. The tract at residues 287 to 313 is disordered; that stretch reads KQQKEQSDTRKSLVGSGDRSERIRTYN.

The protein belongs to the prokaryotic/mitochondrial release factor family. In terms of processing, methylated by PrmC. Methylation increases the termination efficiency of RF1.

It is found in the cytoplasm. Peptide chain release factor 1 directs the termination of translation in response to the peptide chain termination codons UAG and UAA. The protein is Peptide chain release factor 1 of Francisella tularensis subsp. novicida (strain U112).